Here is a 751-residue protein sequence, read N- to C-terminus: 1,3-beta-galactosyl-N-acetylhexosamine phosphorylase (751 aa).

Asp-313 functions as the Proton donor in the catalytic mechanism.

The protein belongs to the glycoside hydrolase 112 family. As to quaternary structure, homodimer.

The catalysed reaction is beta-D-galactosyl-(1-&gt;3)-N-acetyl-D-glucosamine + phosphate = alpha-D-galactose 1-phosphate + N-acetyl-D-glucosamine. Its function is as follows. Reversibly phosphorolyzes lacto-N-biose to Gal1-P and N-acetylglucosamine (GlcNAc) and galacto-N-biose to Gal1-P and N-acetylgalactosamine (GalNAc). Involved in the lacto-N-biose I/galacto-N-biose (LNB/GNB) degradation pathway, which is important for host intestinal colonization by bifidobacteria. The sequence is that of 1,3-beta-galactosyl-N-acetylhexosamine phosphorylase (lnpA) from Bifidobacterium longum subsp. longum (strain ATCC 15707 / DSM 20219 / JCM 1217 / NCTC 11818 / E194b).